The chain runs to 159 residues: Probable metallophosphoesterase MPN_126 (159 aa).

Residues D9, H11, D34, N53, H75, H107, and H109 each contribute to the Mn(2+) site.

Belongs to the metallophosphoesterase superfamily. YfcE family. Requires Mn(2+) as cofactor.

The polypeptide is Probable metallophosphoesterase MPN_126 (Mycoplasma pneumoniae (strain ATCC 29342 / M129 / Subtype 1) (Mycoplasmoides pneumoniae)).